Here is a 171-residue protein sequence, read N- to C-terminus: MEPDNSPRKIQFTVPLLEPHLDPEAAEQIRRRRPTPATLVLTSDQSSPEIDEDRIPNSLLKSTLSMSPRQRKKMTRTTPTMKELQTMVEHHLGQQKQGEEPEGATESTGNQESCPPGIPDTGSASRPDTPGTAQKSAESNPKTQEQCGVEPRTEDSSAHMLPLDSQGASLV.

Residue methionine 1 is modified to N-acetylmethionine. The disordered stretch occupies residues 1 to 171; the sequence is MEPDNSPRKI…PLDSQGASLV (171 aa). An essential for activity region spans residues 9–12; it reads KIQF. Over residues 19-29 the composition is skewed to basic and acidic residues; the sequence is PHLDPEAAEQI. Threonine 35 is subject to Phosphothreonine. The essential for activity stretch occupies residues 42-54; sequence TSDQSSPEIDEDR. Phosphoserine occurs at positions 43, 46, 47, and 67. Over residues 122-146 the composition is skewed to polar residues; the sequence is GSASRPDTPGTAQKSAESNPKTQEQ. The tract at residues 143–171 is interaction with PPP1R15A; it reads TQEQCGVEPRTEDSSAHMLPLDSQGASLV.

The protein belongs to the protein phosphatase inhibitor 1 family. In terms of assembly, interacts with PPP1R15A. Post-translationally, phosphorylation of Thr-35 is required for activity.

Its function is as follows. Inhibitor of protein-phosphatase 1. This protein may be important in hormonal control of glycogen metabolism. Hormones that elevate intracellular cAMP increase I-1 activity in many tissues. I-1 activation may impose cAMP control over proteins that are not directly phosphorylated by PKA. Following a rise in intracellular calcium, I-1 is inactivated by calcineurin (or PP2B). Does not inhibit type-2 phosphatases. This is Protein phosphatase 1 regulatory subunit 1A (Ppp1r1a) from Mus musculus (Mouse).